The sequence spans 142 residues: Arginine decarboxylase proenzyme (142 aa).

Serine 81 acts as the Schiff-base intermediate with substrate; via pyruvic acid in catalysis. Serine 81 is modified (pyruvic acid (Ser); by autocatalysis). Catalysis depends on histidine 86, which acts as the Proton acceptor; for processing activity. The active-site Proton donor; for catalytic activity is the cysteine 101.

It belongs to the prokaryotic AdoMetDC family. Type 1 subfamily. As to quaternary structure, heterooctamer of four alpha and four beta chains arranged as a tetramer of alpha/beta heterodimers. Requires pyruvate as cofactor. Is synthesized initially as an inactive proenzyme. Formation of the active enzyme involves a self-maturation process in which the active site pyruvoyl group is generated from an internal serine residue via an autocatalytic post-translational modification. Two non-identical subunits are generated from the proenzyme in this reaction, and the pyruvate is formed at the N-terminus of the alpha chain, which is derived from the carboxyl end of the proenzyme. The post-translation cleavage follows an unusual pathway, termed non-hydrolytic serinolysis, in which the side chain hydroxyl group of the serine supplies its oxygen atom to form the C-terminus of the beta chain, while the remainder of the serine residue undergoes an oxidative deamination to produce ammonia and the pyruvoyl group blocking the N-terminus of the alpha chain.

The catalysed reaction is L-arginine + H(+) = agmatine + CO2. Its pathway is amine and polyamine biosynthesis; agmatine biosynthesis; agmatine from L-arginine: step 1/1. Specifically catalyzes the decarboxylation of L-arginine to agmatine. Has no S-adenosylmethionine decarboxylase (AdoMetDC) activity. The polypeptide is Arginine decarboxylase proenzyme (Hyperthermus butylicus (strain DSM 5456 / JCM 9403 / PLM1-5)).